We begin with the raw amino-acid sequence, 1486 residues long: Chromosome partition protein MukB (1486 aa).

34 to 41 (GGNGAGKS) lines the ATP pocket. Coiled coils occupy residues 326–418 (LEAD…QYNQ), 444–480 (LETFQAKELEATEKMLSLEQKMSMAQTAHSQFEQAYQ), and 509–603 (RHLA…RAPV). The flexible hinge stretch occupies residues 666–783 (PGGSEDQRLN…EVPLFGRAAR (118 aa)). Coiled coils occupy residues 835 to 923 (EAEI…AKLE), 977 to 1115 (EMLS…TAKA), and 1209 to 1266 (VEAI…QNVS).

It belongs to the SMC family. MukB subfamily. Homodimerization via its hinge domain. Binds to DNA via its C-terminal region. Interacts, and probably forms a ternary complex, with MukE and MukF via its C-terminal region. The complex formation is stimulated by calcium or magnesium. Interacts with tubulin-related protein FtsZ.

It localises to the cytoplasm. The protein resides in the nucleoid. Plays a central role in chromosome condensation, segregation and cell cycle progression. Functions as a homodimer, which is essential for chromosome partition. Involved in negative DNA supercoiling in vivo, and by this means organize and compact chromosomes. May achieve or facilitate chromosome segregation by condensation DNA from both sides of a centrally located replisome during cell division. This Escherichia coli O157:H7 protein is Chromosome partition protein MukB.